Reading from the N-terminus, the 236-residue chain is Ribosome maturation protein SDO1 homolog (236 aa).

It belongs to the SDO1/SBDS family.

This is Ribosome maturation protein SDO1 homolog from Pyrococcus abyssi (strain GE5 / Orsay).